The following is a 374-amino-acid chain: Translocating chain-associated membrane protein 1 (374 aa).

The Cytoplasmic segment spans residues 2-29 (AIRKKSTKSPPVLSHEFILQNHADIVSC). The chain crosses the membrane as a helical span at residues 30 to 50 (VAMVFLLGLMFEITAKASIIF). Over 51-76 (VTLQYNVTLPATEEQATESTSLYYYG) the chain is Lumenal. Asn-56 carries an N-linked (GlcNAc...) asparagine glycan. Residues 77-97 (IKDLATVFFYMLVAIIIHAII) traverse the membrane as a helical segment. The Cytoplasmic portion of the chain corresponds to 98 to 121 (QEYVLDKINRRMHFSKTKHSKFNE). One can recognise a TLC domain in the interval 117-326 (SKFNESGQLS…NFQLRRWREH (210 aa)). A helical transmembrane segment spans residues 122–142 (SGQLSAFYLFSCIWGTFILIS). Residues 143–159 (ENYISDPTILWRAYPHN) are Lumenal-facing. The helical transmembrane segment at 160-180 (LMTFQMKFFYIAQLAYWFHAF) threads the bilayer. Residues 181-192 (PELYFQKTKKED) are Cytoplasmic-facing. The helical transmembrane segment at 193–213 (IPRQLVYIGLYLFHIAGAYLL) threads the bilayer. At 214-217 (NLNH) the chain is on the lumenal side. The chain crosses the membrane as a helical span at residues 218–238 (LGLVLLVLHYFVEFLFHISRL). Residues 239 to 251 (FYFSDEKYQKGFS) lie on the Cytoplasmic side of the membrane. A helical membrane pass occupies residues 252 to 272 (LWAVLFVLGRLLTLILSVLTV). Residues 273–297 (GFGLARAENQKLDFSAGNFNVLAVR) lie on the Lumenal side of the membrane. The chain crosses the membrane as a helical span at residues 298 to 318 (IAVLASICITQAFMMWKFINF). Residues 319–374 (QLRRWREHSTFQAPVVKKKPTVTKGRSSRKGTENGVNGTVTSNGADSPRNRKEKSS) lie on the Cytoplasmic side of the membrane. Over residues 334–347 (VKKKPTVTKGRSSR) the composition is skewed to basic residues. The tract at residues 334–374 (VKKKPTVTKGRSSRKGTENGVNGTVTSNGADSPRNRKEKSS) is disordered. The segment covering 352-363 (NGVNGTVTSNGA) has biased composition (polar residues). Ser-365 is modified (phosphoserine).

It belongs to the TRAM family. Interacts with SEC61B. May interact with Derlin-1/DERL1. In terms of processing, N-glycosylated.

The protein localises to the endoplasmic reticulum membrane. Functionally, involved in the translocation of nascent protein chains into or through the endoplasmic reticulum (ER) membrane by facilitating the proper chain positioning at the SEC61 channel. Regulates the exposure of nascent secretory protein chain to the cytosol during translocation into the ER. May affect the phospholipid bilayer in the vicinity of the lateral gate of the SEC61 channel, thereby facilitating ER protein transport. Intimately associates with transmembrane (TM) domain of nascent membrane proteins during the entire integration process into the ER membrane. Associates with the second TM domain of G-protein-coupled receptor opsin/OPSD nascent chain in the ER membrane, which may facilitate its integration into the membrane. Under conditions of ER stress, participates in the disposal of misfolded ER membrane proteins during the unfolded protein response (UPR), an integrated stress response (ISR) pathway, by selectively retrotranslocating misfolded ER-membrane proteins from the ER into the cytosol where they are ubiquitinated and degraded by the proteasome. This Canis lupus familiaris (Dog) protein is Translocating chain-associated membrane protein 1 (TRAM1).